Consider the following 64-residue polypeptide: Large ribosomal subunit protein bL35 (64 aa).

Over residues 1–24 the composition is skewed to basic residues; it reads MPKMKSHRGACKRFKKTASGKVKR. The interval 1-64 is disordered; the sequence is MPKMKSHRGA…EKQIKRMILA (64 aa). Residues 25–35 are compositionally biased toward basic and acidic residues; the sequence is ERMYGSHNLEK. The span at 36 to 45 shows a compositional bias: basic residues; the sequence is KNRKRTRRLH.

Belongs to the bacterial ribosomal protein bL35 family.

This Prosthecochloris aestuarii (strain DSM 271 / SK 413) protein is Large ribosomal subunit protein bL35.